The following is a 442-amino-acid chain: Sexual development regulator VELC (442 aa).

Disordered stretches follow at residues 1-192 (MPVH…ASLA) and 396-442 (KKGN…IRRS). Residues 45 to 54 (IAPPPPPTPP) are compositionally biased toward pro residues. A compositionally biased stretch (low complexity) spans 79-97 (PGPRRPSNPSSPQHPQQPG). A Velvet domain is found at 213 to 396 (FSTSEYHLHV…KEQGCLISIK (184 aa)). Residues 401–411 (KGGGGGGGGPS) show a composition bias toward gly residues. Residues 433–442 (AGKRKRIRRS) show a composition bias toward basic residues.

It belongs to the velvet family. VelC subfamily.

It is found in the nucleus. Its function is as follows. Velvet-domain-containing protein that acts as a positive regulator of sexual development. Plays an important role in pathogenicity through regulating positively appressorium-mediated penetration and invasive growth. The protein is Sexual development regulator VELC of Pyricularia oryzae (strain 70-15 / ATCC MYA-4617 / FGSC 8958) (Rice blast fungus).